The sequence spans 259 residues: Ribonuclease PH (259 aa).

Phosphate-binding positions include R88 and 126 to 128; that span reads GTR.

Belongs to the RNase PH family. Homohexameric ring arranged as a trimer of dimers.

The enzyme catalyses tRNA(n+1) + phosphate = tRNA(n) + a ribonucleoside 5'-diphosphate. Phosphorolytic 3'-5' exoribonuclease that plays an important role in tRNA 3'-end maturation. Removes nucleotide residues following the 3'-CCA terminus of tRNAs; can also add nucleotides to the ends of RNA molecules by using nucleoside diphosphates as substrates, but this may not be physiologically important. Probably plays a role in initiation of 16S rRNA degradation (leading to ribosome degradation) during starvation. This is Ribonuclease PH from Mycobacterium avium (strain 104).